We begin with the raw amino-acid sequence, 130 residues long: Small ribosomal subunit protein uS8A (130 aa).

It belongs to the universal ribosomal protein uS8 family. Component of the small ribosomal subunit (SSU). Mature ribosomes consist of a small (40S) and a large (60S) subunit. The 40S subunit contains about 32 different proteins and 1 molecule of RNA (18S). The 60S subunit contains 45 different proteins and 3 molecules of RNA (25S, 5.8S and 5S).

It localises to the cytoplasm. In terms of biological role, component of the ribosome, a large ribonucleoprotein complex responsible for the synthesis of proteins in the cell. The small ribosomal subunit (SSU) binds messenger RNAs (mRNAs) and translates the encoded message by selecting cognate aminoacyl-transfer RNA (tRNA) molecules. The large subunit (LSU) contains the ribosomal catalytic site termed the peptidyl transferase center (PTC), which catalyzes the formation of peptide bonds, thereby polymerizing the amino acids delivered by tRNAs into a polypeptide chain. The nascent polypeptides leave the ribosome through a tunnel in the LSU and interact with protein factors that function in enzymatic processing, targeting, and the membrane insertion of nascent chains at the exit of the ribosomal tunnel. The protein is Small ribosomal subunit protein uS8A (RPS22A) of Candida albicans (strain SC5314 / ATCC MYA-2876) (Yeast).